A 296-amino-acid polypeptide reads, in one-letter code: Glycine--tRNA ligase alpha subunit (296 aa).

The protein belongs to the class-II aminoacyl-tRNA synthetase family. Tetramer of two alpha and two beta subunits.

The protein resides in the cytoplasm. The enzyme catalyses tRNA(Gly) + glycine + ATP = glycyl-tRNA(Gly) + AMP + diphosphate. This chain is Glycine--tRNA ligase alpha subunit, found in Exiguobacterium sibiricum (strain DSM 17290 / CCUG 55495 / CIP 109462 / JCM 13490 / 255-15).